The primary structure comprises 565 residues: Sulfite reductase [NADPH] hemoprotein beta-component (565 aa).

The [4Fe-4S] cluster site is built by cysteine 429, cysteine 435, cysteine 474, and cysteine 478. Position 478 (cysteine 478) interacts with siroheme.

This sequence belongs to the nitrite and sulfite reductase 4Fe-4S domain family. In terms of assembly, alpha(8)-beta(8). The alpha component is a flavoprotein, the beta component is a hemoprotein. It depends on siroheme as a cofactor. [4Fe-4S] cluster is required as a cofactor.

It catalyses the reaction hydrogen sulfide + 3 NADP(+) + 3 H2O = sulfite + 3 NADPH + 4 H(+). It participates in sulfur metabolism; hydrogen sulfide biosynthesis; hydrogen sulfide from sulfite (NADPH route): step 1/1. In terms of biological role, component of the sulfite reductase complex that catalyzes the 6-electron reduction of sulfite to sulfide. This is one of several activities required for the biosynthesis of L-cysteine from sulfate. In Shewanella loihica (strain ATCC BAA-1088 / PV-4), this protein is Sulfite reductase [NADPH] hemoprotein beta-component.